The sequence spans 226 residues: Histidine biosynthesis bifunctional protein HisIE (226 aa).

Residues 1–131 are phosphoribosyl-AMP cyclohydrolase; the sequence is MMPMNQEFIQ…STFNRPLSNT (131 aa). Residues 132 to 226 are phosphoribosyl-ATP pyrophosphohydrolase; the sequence is CSELFEVIKD…KRRQSKSNPK (95 aa).

The protein in the N-terminal section; belongs to the PRA-CH family. It in the C-terminal section; belongs to the PRA-PH family.

It is found in the cytoplasm. The enzyme catalyses 1-(5-phospho-beta-D-ribosyl)-ATP + H2O = 1-(5-phospho-beta-D-ribosyl)-5'-AMP + diphosphate + H(+). It catalyses the reaction 1-(5-phospho-beta-D-ribosyl)-5'-AMP + H2O = 1-(5-phospho-beta-D-ribosyl)-5-[(5-phospho-beta-D-ribosylamino)methylideneamino]imidazole-4-carboxamide. It functions in the pathway amino-acid biosynthesis; L-histidine biosynthesis; L-histidine from 5-phospho-alpha-D-ribose 1-diphosphate: step 2/9. Its pathway is amino-acid biosynthesis; L-histidine biosynthesis; L-histidine from 5-phospho-alpha-D-ribose 1-diphosphate: step 3/9. This Prochlorococcus marinus (strain SARG / CCMP1375 / SS120) protein is Histidine biosynthesis bifunctional protein HisIE.